A 380-amino-acid polypeptide reads, in one-letter code: Cytochrome b (380 aa).

A run of 4 helical transmembrane segments spans residues 34–54 (FGSLLGICLATQILTGLLLAA), 78–99 (WLIRNLHANGASFFFICIYLHI), 114–134 (WNTGVILLLTLMATAFVGYVL), and 179–199 (FFTLHFLLPFMIMGLTLIHLT). Heme b is bound by residues H84 and H98. Heme b-binding residues include H183 and H197. H202 serves as a coordination point for a ubiquinone. Transmembrane regions (helical) follow at residues 227–247 (LKDILGFMLMLLPLMTLALFS), 289–309 (LGGVLALAASVLILFLAPLLH), 321–341 (LSQLLFWTLTANLLILTWVGS), and 348–368 (FMIIGQLASLTYFTILLVLFP).

This sequence belongs to the cytochrome b family. As to quaternary structure, the cytochrome bc1 complex contains 11 subunits: 3 respiratory subunits (MT-CYB, CYC1 and UQCRFS1), 2 core proteins (UQCRC1 and UQCRC2) and 6 low-molecular weight proteins (UQCRH/QCR6, UQCRB/QCR7, UQCRQ/QCR8, UQCR10/QCR9, UQCR11/QCR10 and a cleavage product of UQCRFS1). This cytochrome bc1 complex then forms a dimer. Heme b serves as cofactor.

Its subcellular location is the mitochondrion inner membrane. Its function is as follows. Component of the ubiquinol-cytochrome c reductase complex (complex III or cytochrome b-c1 complex) that is part of the mitochondrial respiratory chain. The b-c1 complex mediates electron transfer from ubiquinol to cytochrome c. Contributes to the generation of a proton gradient across the mitochondrial membrane that is then used for ATP synthesis. The protein is Cytochrome b (MT-CYB) of Anthropoides virgo (Demoiselle crane).